A 107-amino-acid polypeptide reads, in one-letter code: Integration host factor subunit beta (107 aa).

Positions 56-107 (RPSRVGRNPKSGEKVLVPEKHVPHFKPGKELRERVDRNAGEPLKADAADDDL) are disordered. Residues 65 to 107 (KSGEKVLVPEKHVPHFKPGKELRERVDRNAGEPLKADAADDDL) are compositionally biased toward basic and acidic residues.

Belongs to the bacterial histone-like protein family. In terms of assembly, heterodimer of an alpha and a beta chain.

In terms of biological role, this protein is one of the two subunits of integration host factor, a specific DNA-binding protein that functions in genetic recombination as well as in transcriptional and translational control. This is Integration host factor subunit beta from Paraburkholderia phymatum (strain DSM 17167 / CIP 108236 / LMG 21445 / STM815) (Burkholderia phymatum).